The primary structure comprises 178 residues: Ribosome maturation factor RimP (178 aa).

It belongs to the RimP family.

Its subcellular location is the cytoplasm. Its function is as follows. Required for maturation of 30S ribosomal subunits. The chain is Ribosome maturation factor RimP from Streptococcus pyogenes serotype M3 (strain ATCC BAA-595 / MGAS315).